The primary structure comprises 205 residues: MAGKKKHLLKVIILGESGVGKTSIMNQYVNRKFSKDYKATIGADFLTKEVLVDDKVVTLQLWDTAGQERFQSLGVAFYRGADCCVLVYDVNNSKSFETLDSWRDEFLIQASPSNPETFPFILLGNKVDVEEQKRMVSKSKALAFCQARGEIPYFETSAKEAINVQEAFETVAKLALENMDSDDIAADFTDPIHLDMESQKTSCYC.

Residues 17 to 23 (SGVGKTS), 33 to 40 (FSKDYKAT), Gly-66, 125 to 128 (NKVD), and 157 to 159 (SAK) contribute to the GTP site. Residues 37 to 45 (YKATIGADF) carry the Effector region motif. 2 S-geranylgeranyl cysteine lipidation sites follow: Cys-203 and Cys-205. A Cysteine methyl ester modification is found at Cys-205.

This sequence belongs to the small GTPase superfamily. Rab family.

It localises to the vacuole membrane. Its activity is regulated as follows. Rab activation is generally mediated by a guanine exchange factor (GEF), while inactivation through hydrolysis of bound GTP is catalyzed by a GTPase activating protein (GAP). Functionally, ypt/Rab-type GTPases are key regulators of membrane trafficking and intracellular vesicular transport. They act as molecular switches that convert between GTP-bound and GDP-bound states, and regulate virtually all steps of membrane traffic from the formation of the transport vesicle at the donor membrane to its fusion at the target membrane. In the GDP-bound state, Ypt proteins are predominantly cytosolic, solubilized through the interaction with a GDP dissociation inhibitor (GDI). In the GTP-bound state, the proteins are membrane bound and interact with specific effector proteins that select cargo, promote vesicle movement, or verify the correct site of fusion. Ypt7 is necessary for trafficking from the endosome to the vacuole and for homotypic vacuole fusion. Plays an important role in sporulation. The polypeptide is Ypt/Rab-type GTPase ypt7 (ypt7) (Schizosaccharomyces pombe (strain 972 / ATCC 24843) (Fission yeast)).